A 402-amino-acid chain; its full sequence is Putative FBD-associated F-box protein At5g56690 (402 aa).

The F-box domain maps to 1–47 (MAEISGLPDDLLVKILAFLPTKVAISTSVLSKQWRFLWMWLPKLKYD). Residues 349–401 (SWSKNQGSVPKCFLNSLETFRVKWYYSEEQEDRDFLSLIFKHARCLKSTSILH) form the FBD domain.

The polypeptide is Putative FBD-associated F-box protein At5g56690 (Arabidopsis thaliana (Mouse-ear cress)).